Reading from the N-terminus, the 313-residue chain is Dihydroorotate dehydrogenase B (NAD(+)), catalytic subunit (313 aa).

FMN contacts are provided by residues S21 and 45 to 46 (KA). Substrate is bound by residues K45 and 69-73 (NAIGL). Residues N99 and N127 each coordinate FMN. Substrate is bound at residue N127. The active-site Nucleophile is C130. I191 lines the FMN pocket. A substrate-binding site is contributed by 192–193 (NT). FMN contacts are provided by residues G217, 243–244 (GG), and 265–266 (GT).

It belongs to the dihydroorotate dehydrogenase family. Type 1 subfamily. As to quaternary structure, heterotetramer of 2 PyrK and 2 PyrD type B subunits. FMN is required as a cofactor.

It is found in the cytoplasm. The catalysed reaction is (S)-dihydroorotate + NAD(+) = orotate + NADH + H(+). The protein operates within pyrimidine metabolism; UMP biosynthesis via de novo pathway; orotate from (S)-dihydroorotate (NAD(+) route): step 1/1. Its function is as follows. Catalyzes the conversion of dihydroorotate to orotate with NAD(+) as electron acceptor. This chain is Dihydroorotate dehydrogenase B (NAD(+)), catalytic subunit (pyrD), found in Bacillus caldolyticus.